A 249-amino-acid chain; its full sequence is BPI fold-containing family A member 1 (249 aa).

Positions 1–15 are cleaved as a signal peptide; that stretch reads MFQVAGLIVFCGLLA. Residues 81 to 86 are important for surfactant activity and antibacterial properties; the sequence is LLGGLL. An N-linked (GlcNAc...) asparagine glycan is attached at N151. C173 and C217 are disulfide-bonded.

The protein belongs to the BPI/LBP/Plunc superfamily. Plunc family. Monomer. Interacts (via N-terminus) with SCNN1B, a subunit of the heterotrimeric epithelial sodium channel (ENaC); this inhibits proteolytic activation of ENaC. Expressed in lung and trachea.

It localises to the secreted. Its function is as follows. Lipid-binding protein which shows high specificity for the surfactant phospholipid dipalmitoylphosphatidylcholine (DPPC). Plays a role in the innate immune responses of the upper airways. Reduces the surface tension in secretions from airway epithelia and inhibits the formation of biofilm by pathogenic Gram-negative bacteria, such as P.aeruginosa and K.pneumoniae. Negatively regulates proteolytic cleavage of SCNN1G, an event that is required for activation of the epithelial sodium channel (ENaC), and thereby contributes to airway surface liquid homeostasis and proper clearance of mucus. Plays a role in the airway inflammatory response after exposure to irritants. May attract macrophages and neutrophils. This Sus scrofa (Pig) protein is BPI fold-containing family A member 1 (BPIFA1).